The primary structure comprises 828 residues: Periplasmic nitrate reductase (828 aa).

A signal peptide (tat-type signal) is located at residues 1–31 (MKLSRRSFMKANAVAAAAAAAGLSVPGVARA). Positions 39 to 95 (IKWDKAPCRFCGTGCGVLVGTQQGRVVACQGDPDAPVNRGLNCIKGYFLPKIMYGKD) constitute a 4Fe-4S Mo/W bis-MGD-type domain. [4Fe-4S] cluster-binding residues include C46, C49, C53, and C81. Residues K83, Q150, N175, C179, 212–219 (WGSNMAEM), 243–247 (STFQH), 262–264 (QSD), M372, Q376, N482, 508–509 (SD), K531, D558, and 718–727 (TGRVLEHWHT) contribute to the Mo-bis(molybdopterin guanine dinucleotide) site. F794 contributes to the substrate binding site. Residues N802 and K819 each coordinate Mo-bis(molybdopterin guanine dinucleotide).

The protein belongs to the prokaryotic molybdopterin-containing oxidoreductase family. NasA/NapA/NarB subfamily. As to quaternary structure, component of the periplasmic nitrate reductase NapAB complex composed of NapA and NapB. The cofactor is [4Fe-4S] cluster. Mo-bis(molybdopterin guanine dinucleotide) is required as a cofactor. In terms of processing, predicted to be exported by the Tat system. The position of the signal peptide cleavage has not been experimentally proven.

It localises to the periplasm. The enzyme catalyses 2 Fe(II)-[cytochrome] + nitrate + 2 H(+) = 2 Fe(III)-[cytochrome] + nitrite + H2O. In terms of biological role, catalytic subunit of the periplasmic nitrate reductase complex NapAB. Receives electrons from NapB and catalyzes the reduction of nitrate to nitrite. The chain is Periplasmic nitrate reductase from Salmonella arizonae (strain ATCC BAA-731 / CDC346-86 / RSK2980).